Reading from the N-terminus, the 217-residue chain is Somatotropin (217 aa).

The signal sequence occupies residues 1 to 26 (MMAAGPRTSLLLAFALLCLPWTQVVG). Residue H46 participates in Zn(2+) binding. C79 and C190 are disulfide-bonded. At S132 the chain carries Phosphoserine. E199 contacts Zn(2+). An intrachain disulfide couples C207 to C215.

Belongs to the somatotropin/prolactin family.

Its subcellular location is the secreted. Functionally, plays an important role in growth control. Its major role in stimulating body growth is to stimulate the liver and other tissues to secrete IGF1. It stimulates both the differentiation and proliferation of myoblasts. It also stimulates amino acid uptake and protein synthesis in muscle and other tissues. This Bos taurus (Bovine) protein is Somatotropin (GH1).